Consider the following 434-residue polypeptide: Enolase (434 aa).

Q167 contacts (2R)-2-phosphoglycerate. E209 functions as the Proton donor in the catalytic mechanism. Residues D246, E291, and D318 each contribute to the Mg(2+) site. (2R)-2-phosphoglycerate-binding residues include K343, R372, S373, and K394. Residue K343 is the Proton acceptor of the active site.

Belongs to the enolase family. In terms of assembly, component of the RNA degradosome, a multiprotein complex involved in RNA processing and mRNA degradation. The cofactor is Mg(2+).

It localises to the cytoplasm. The protein resides in the secreted. The protein localises to the cell surface. It carries out the reaction (2R)-2-phosphoglycerate = phosphoenolpyruvate + H2O. The protein operates within carbohydrate degradation; glycolysis; pyruvate from D-glyceraldehyde 3-phosphate: step 4/5. Catalyzes the reversible conversion of 2-phosphoglycerate (2-PG) into phosphoenolpyruvate (PEP). It is essential for the degradation of carbohydrates via glycolysis. The polypeptide is Enolase (Buchnera aphidicola subsp. Acyrthosiphon pisum (strain APS) (Acyrthosiphon pisum symbiotic bacterium)).